Here is a 215-residue protein sequence, read N- to C-terminus: Nascent polypeptide-associated complex subunit alpha (215 aa).

The disordered stretch occupies residues 1–82 (MPGEATETVP…EKKARKAMSK (82 aa)). Positions 9 to 28 (VPVTEQEMQQPQAETGSGTE) are enriched in polar residues. Over residues 29-42 (SDSDESVPDLEEGD) the composition is skewed to acidic residues. Low complexity predominate over residues 44–57 (AQTQTQQAQLAAAA). The region spanning 70-135 (SRSEKKARKA…AKIEDLSQQA (66 aa)) is the NAC-A/B domain. Phosphoserine is present on Ser166. The UBA domain maps to 176 to 213 (VEVKDIELVMSQANVSRAKAVRALKNNNNDIVNAIMEL).

Belongs to the NAC-alpha family.

Functionally, may promote appropriate targeting of ribosome-nascent polypeptide complexes. The chain is Nascent polypeptide-associated complex subunit alpha (naca) from Danio rerio (Zebrafish).